Reading from the N-terminus, the 375-residue chain is Chaperone protein DnaJ (375 aa).

The 66-residue stretch at 5–70 (DYYEVLGVER…GKRSAYDQYG (66 aa)) folds into the J domain. A CR-type zinc finger spans residues 134 to 212 (GTTVTIRVPT…CHGQGRVEES (79 aa)). Cysteine 147, cysteine 150, cysteine 164, cysteine 167, cysteine 186, cysteine 189, cysteine 200, and cysteine 203 together coordinate Zn(2+). CXXCXGXG motif repeat units follow at residues 147–154 (CKTCDGTG), 164–171 (CTTCGGIG), 186–193 (CPRCHGSG), and 200–207 (CGSCHGQG).

The protein belongs to the DnaJ family. Homodimer. Zn(2+) is required as a cofactor.

It localises to the cytoplasm. Functionally, participates actively in the response to hyperosmotic and heat shock by preventing the aggregation of stress-denatured proteins and by disaggregating proteins, also in an autonomous, DnaK-independent fashion. Unfolded proteins bind initially to DnaJ; upon interaction with the DnaJ-bound protein, DnaK hydrolyzes its bound ATP, resulting in the formation of a stable complex. GrpE releases ADP from DnaK; ATP binding to DnaK triggers the release of the substrate protein, thus completing the reaction cycle. Several rounds of ATP-dependent interactions between DnaJ, DnaK and GrpE are required for fully efficient folding. Also involved, together with DnaK and GrpE, in the DNA replication of plasmids through activation of initiation proteins. The sequence is that of Chaperone protein DnaJ from Ectopseudomonas mendocina (strain ymp) (Pseudomonas mendocina).